The chain runs to 37 residues: Large ribosomal subunit protein bL36 (37 aa).

Belongs to the bacterial ribosomal protein bL36 family.

The sequence is that of Large ribosomal subunit protein bL36 from Clostridium kluyveri (strain NBRC 12016).